The sequence spans 601 residues: Glutathione-regulated potassium-efflux system protein KefB (601 aa).

Helical transmembrane passes span 4 to 24 (ADLL…VPLA), 29 to 49 (IGAV…GLGF), 55 to 75 (EILH…GLEL), 87 to 107 (IFGV…GLLM), 111 to 131 (FLWQ…TAMA), 152 to 172 (VLLF…LLAG), 177 to 197 (HFDW…LIGG), 207 to 227 (FIAA…LVLS), 230 to 250 (LFMD…GVLL), 262 to 282 (AIDP…GMSL), 284 to 304 (LGVL…LVAI), 324 to 344 (MQFA…FSTA), and 356 to 376 (ALLL…MKGI). One can recognise an RCK N-terminal domain in the interval 400–519 (KPQVIVVGFG…AGVTQFSRET (120 aa)).

This sequence belongs to the monovalent cation:proton antiporter 2 (CPA2) transporter (TC 2.A.37) family. KefB subfamily. In terms of assembly, interacts with the regulatory subunit KefG.

It is found in the cell inner membrane. Functionally, pore-forming subunit of a potassium efflux system that confers protection against electrophiles. Catalyzes K(+)/H(+) antiport. The protein is Glutathione-regulated potassium-efflux system protein KefB of Salmonella schwarzengrund (strain CVM19633).